The chain runs to 100 residues: Small ribosomal subunit protein bS21 (100 aa).

Residues 61 to 100 form a disordered region; it reads KLQREGLLPMKPKPVFGAGPGGDRGRGPAAGAGAGPRGPR. Positions 78–100 are enriched in gly residues; that stretch reads AGPGGDRGRGPAAGAGAGPRGPR.

This sequence belongs to the bacterial ribosomal protein bS21 family.

In Rhodopseudomonas palustris (strain BisB18), this protein is Small ribosomal subunit protein bS21.